Consider the following 174-residue polypeptide: Histone deacetylase complex subunit SAP30 homolog (174 aa).

The Atypical zinc finger occupies 22–70 (CCLLDDGERCRKQAGNASYSKRIQKTVTQRRLKLSIDSHARHIYICDFH).

This sequence belongs to the SAP30 family. As to quaternary structure, component of the class 1 Sin3-histone deacetylase complex (HDAC).

It localises to the nucleus. Required for the function of the class 1 Sin3-histone deacetylase complex (HDAC). In Anopheles gambiae (African malaria mosquito), this protein is Histone deacetylase complex subunit SAP30 homolog.